A 287-amino-acid polypeptide reads, in one-letter code: ATP synthase gamma chain (287 aa).

It belongs to the ATPase gamma chain family. F-type ATPases have 2 components, CF(1) - the catalytic core - and CF(0) - the membrane proton channel. CF(1) has five subunits: alpha(3), beta(3), gamma(1), delta(1), epsilon(1). CF(0) has three main subunits: a, b and c.

The protein localises to the cell membrane. Functionally, produces ATP from ADP in the presence of a proton gradient across the membrane. The gamma chain is believed to be important in regulating ATPase activity and the flow of protons through the CF(0) complex. This is ATP synthase gamma chain from Brevibacillus brevis (strain 47 / JCM 6285 / NBRC 100599).